The sequence spans 168 residues: Putative adenylate kinase (168 aa).

Residues Gly10, Gly12, Lys13, Thr14, and Thr15 each coordinate ATP. Residues 28 to 51 (HLNERIREEGLDAGRDEERDSLVA) form an NMP region. The interval 97-107 (DRGEPAAKAAE) is LID. An ATP-binding site is contributed by Arg98.

Belongs to the adenylate kinase family. AK6 subfamily. In terms of assembly, interacts with uS11. Not a structural component of 40S pre-ribosomes, but transiently interacts with them by binding to uS11.

It carries out the reaction AMP + ATP = 2 ADP. The enzyme catalyses ATP + H2O = ADP + phosphate + H(+). Functionally, broad-specificity nucleoside monophosphate (NMP) kinase that catalyzes the reversible transfer of the terminal phosphate group between nucleoside triphosphates and monophosphates. Also has ATPase activity. Involved in the late maturation steps of the 30S ribosomal particles, specifically 16S rRNA maturation. While NMP activity is not required for ribosome maturation, ATPase activity is. Associates transiently with small ribosomal subunit protein uS11. ATP hydrolysis breaks the interaction with uS11. May temporarily remove uS11 from the ribosome to enable a conformational change of the ribosomal RNA that is needed for the final maturation step of the small ribosomal subunit. This is Putative adenylate kinase from Natronomonas pharaonis (strain ATCC 35678 / DSM 2160 / CIP 103997 / JCM 8858 / NBRC 14720 / NCIMB 2260 / Gabara) (Halobacterium pharaonis).